A 99-amino-acid polypeptide reads, in one-letter code: DASH complex subunit DAD1 (99 aa).

Residues 69–99 (GMNHQTRENTRDENNKISSSDTEDENNNNKI) are disordered. The span at 73-83 (QTRENTRDENN) shows a compositional bias: basic and acidic residues. Residues 89-99 (DTEDENNNNKI) are compositionally biased toward acidic residues.

This sequence belongs to the DASH complex DAD1 family. In terms of assembly, component of the DASH complex consisting of ASK1, DAD1, DAD2, DAD3, DAD4, DAM1, DUO1, HSK3, SPC19 and SPC34, with a stoichiometry of one copy of each subunit per complex. Multiple DASH complexes oligomerize to form a ring that encircles spindle microtubules and organizes the rod-like NDC80 complexes of the outer kinetochore. DASH complex oligomerization strengthens microtubule attachments. On cytoplasmic microtubules, DASH complexes appear to form patches instead of rings.

Its subcellular location is the chromosome. It localises to the centromere. The protein localises to the kinetochore. It is found in the cytoplasm. The protein resides in the cytoskeleton. Its subcellular location is the spindle. It localises to the nucleus. Functionally, component of the DASH complex that connects microtubules with kinetochores and couples microtubule depolymerisation to chromosome movement; it is involved in retrieving kinetochores to the spindle poles before their re-orientation on the spindle in early mitosis and allows microtubule depolymerization to pull chromosomes apart and resist detachment during anaphase. Kinetochores, consisting of a centromere-associated inner segment and a microtubule-contacting outer segment, play a crucial role in chromosome segregation by mediating the physical connection between centromeric DNA and microtubules. Kinetochores also serve as an input point for the spindle assembly checkpoint, which delays anaphase until all chromosomes have bioriented on the mitotic spindle. The sequence is that of DASH complex subunit DAD1 from Candida albicans (strain SC5314 / ATCC MYA-2876) (Yeast).